A 133-amino-acid polypeptide reads, in one-letter code: uncharacterized protein (133 aa).

This is an uncharacterized protein from Saccharomyces cerevisiae (strain ATCC 204508 / S288c) (Baker's yeast).